A 248-amino-acid polypeptide reads, in one-letter code: Trypsin I-P1 (248 aa).

A signal peptide spans 1–15; sequence MKFLVLVAFVGVTVA. Residues 16–25 constitute a propeptide, activation peptide; it reads FPISDEDDDK. Residues 26–246 form the Peptidase S1 domain; sequence IVGGYSCARS…YVSWIKTTMS (221 aa). 6 cysteine pairs are disulfide-bonded: cysteine 32/cysteine 162, cysteine 50/cysteine 66, cysteine 134/cysteine 235, cysteine 141/cysteine 208, cysteine 173/cysteine 187, and cysteine 198/cysteine 222. The active-site Charge relay system is histidine 65. Positions 77, 79, and 87 each coordinate Ca(2+). Catalysis depends on aspartate 109, which acts as the Charge relay system. Residue serine 202 is the Charge relay system of the active site.

The protein belongs to the peptidase S1 family. Requires Ca(2+) as cofactor. As to expression, high levels are seen in the pancreas while lower levels are found in the liver, spleen and thymus.

It is found in the secreted. The protein localises to the extracellular space. The enzyme catalyses Preferential cleavage: Arg-|-Xaa, Lys-|-Xaa.. In Gallus gallus (Chicken), this protein is Trypsin I-P1.